The primary structure comprises 351 residues: Polyribonucleotide 5'-hydroxyl-kinase TK1956 (351 aa).

ATP is bound at residue 34–41 (GGVDSGKS).

A divalent metal cation is required as a cofactor.

It catalyses the reaction a 5'-end dephospho-2'-deoxyribonucleoside-DNA + ATP = a 5'-end 5'-phospho-2'-deoxyribonucleoside-DNA + ADP + H(+). The enzyme catalyses a 5'-end dephospho-ribonucleoside-RNA + ATP = a 5'-end 5'-phospho-ribonucleoside-RNA + ADP + H(+). Its function is as follows. Polynucleotide kinase that can phosphorylate the 5'-hydroxyl groups of both single-stranded RNA (ssRNA) and single-stranded DNA (ssDNA). Exhibits a strong preference for ssRNA. This is Polyribonucleotide 5'-hydroxyl-kinase TK1956 from Thermococcus kodakarensis (strain ATCC BAA-918 / JCM 12380 / KOD1) (Pyrococcus kodakaraensis (strain KOD1)).